The following is a 255-amino-acid chain: Thiazole synthase (255 aa).

Lys-96 functions as the Schiff-base intermediate with DXP in the catalytic mechanism. 1-deoxy-D-xylulose 5-phosphate contacts are provided by residues Gly-157, 183–184 (AG), and 205–206 (NT).

Belongs to the ThiG family. In terms of assembly, homotetramer. Forms heterodimers with either ThiH or ThiS.

It localises to the cytoplasm. The enzyme catalyses [ThiS sulfur-carrier protein]-C-terminal-Gly-aminoethanethioate + 2-iminoacetate + 1-deoxy-D-xylulose 5-phosphate = [ThiS sulfur-carrier protein]-C-terminal Gly-Gly + 2-[(2R,5Z)-2-carboxy-4-methylthiazol-5(2H)-ylidene]ethyl phosphate + 2 H2O + H(+). It functions in the pathway cofactor biosynthesis; thiamine diphosphate biosynthesis. In terms of biological role, catalyzes the rearrangement of 1-deoxy-D-xylulose 5-phosphate (DXP) to produce the thiazole phosphate moiety of thiamine. Sulfur is provided by the thiocarboxylate moiety of the carrier protein ThiS. In vitro, sulfur can be provided by H(2)S. The chain is Thiazole synthase from Heliobacterium modesticaldum (strain ATCC 51547 / Ice1).